A 348-amino-acid chain; its full sequence is Selenide, water dikinase (348 aa).

Selenocysteine 17 is an active-site residue. Position 17 (selenocysteine 17) is a non-standard amino acid, selenocysteine. Residues lysine 20 and 48-50 contribute to the ATP site; that span reads TAD. Aspartate 51 is a Mg(2+) binding site. Residues aspartate 68, aspartate 91, and 138-140 each bind ATP; that span reads GHT. Aspartate 91 provides a ligand contact to Mg(2+). Aspartate 226 contributes to the Mg(2+) binding site.

Belongs to the selenophosphate synthase 1 family. Class I subfamily. As to quaternary structure, homodimer. Mg(2+) serves as cofactor.

The catalysed reaction is hydrogenselenide + ATP + H2O = selenophosphate + AMP + phosphate + 2 H(+). In terms of biological role, synthesizes selenophosphate from selenide and ATP. The sequence is that of Selenide, water dikinase from Clostridioides difficile (strain 630) (Peptoclostridium difficile).